The primary structure comprises 226 residues: MSLSAFYVTGTDTGIGKTFVSCILLHMLRGRGQRAVGMKPVASGCTYSDTGWRNEDALALQAASDPTPAYDLINPYALPAAVAPEIAAIEARVTVALEPLSASFTQLRAQADVVVVEGVGGWATPLNATIDQATLVRALEIPVVLVVGLRLGCMNHARLSTAAIMADGLRCIGWIANTIDPHMARIEENLALLRQRLPIPYWGHLPHIPPGINPATLATRLHPQGD.

14-19 (GIGKTF) lines the ATP pocket. Mg(2+) is bound at residue threonine 18. The active site involves lysine 39. Residue serine 43 participates in substrate binding. Residues aspartate 56, 117–120 (EGVG), 177–178 (NT), 206–208 (PHI), and asparagine 213 contribute to the ATP site. The Mg(2+) site is built by aspartate 56 and glutamate 117.

The protein belongs to the dethiobiotin synthetase family. In terms of assembly, homodimer. Mg(2+) serves as cofactor.

The protein localises to the cytoplasm. It catalyses the reaction (7R,8S)-7,8-diammoniononanoate + CO2 + ATP = (4R,5S)-dethiobiotin + ADP + phosphate + 3 H(+). Its pathway is cofactor biosynthesis; biotin biosynthesis; biotin from 7,8-diaminononanoate: step 1/2. Functionally, catalyzes a mechanistically unusual reaction, the ATP-dependent insertion of CO2 between the N7 and N8 nitrogen atoms of 7,8-diaminopelargonic acid (DAPA, also called 7,8-diammoniononanoate) to form a ureido ring. The chain is ATP-dependent dethiobiotin synthetase BioD from Xylella fastidiosa (strain M12).